Consider the following 456-residue polypeptide: MASRSLGGLSGIRGGGGGGGKKSLSSRNAAVERRNLITVCRFSVKTLIDRSCFETIDDSSPEFNNFAAILEQILSHRLKGQVTWFGYESPRSFWDYIRVACRKVSQNCICSIENMENVSSSRAKGRAWIRVALMEKHLSEYISTALRDFKTTRRFYEDGAIVLGEEANMLAGMLLGLNAIDFSFCLKGEGLDGSFPAVIDYTPYLKYIQSSDSISSDEEELRTLGSSGSESSTPENVGPPFLMDENSWFNKCKRVKQKYQLTLEQKGYLEELLRLRENQLSESVSQNKILLQRIEDSDLAHKLEKEQLEYIIVELQDQLTVLKNNDLRSRQELTAHLTNQWPSPGALDVNAVALDTLLYRKHNKQWYEKSYQSLDQLSAEVSLSQTSLDPGQSQEGDGKQDTLNIMSEGKEDTPSLLGLCGSLTSVASYKSLTSLKSNDYLASPTTEMTSPGLTPS.

The segment at 1-26 (MASRSLGGLSGIRGGGGGGGKKSLSS) is disordered. Positions 8–21 (GLSGIRGGGGGGGK) are enriched in gly residues. Position 13 is an omega-N-methylarginine (arginine 13). Residues 57–189 (DDSSPEFNNF…IDFSFCLKGE (133 aa)) enclose the RUN domain. Residues serine 215 and serine 216 each carry the phosphoserine modification. Residues 300–325 (AHKLEKEQLEYIIVELQDQLTVLKNN) are a coiled coil. Residues 382 to 405 (SLSQTSLDPGQSQEGDGKQDTLNI) form a disordered region.

This sequence belongs to the RUNDC3 family. In terms of assembly, interacts with RAP2A.

The sequence is that of RUN domain-containing protein 3B (RUNDC3B) from Macaca fascicularis (Crab-eating macaque).